The chain runs to 360 residues: D-alanine--D-alanine ligase (360 aa).

The ATP-grasp domain maps to 134-343; it reads KILAQRVGVP…YTELITRLIQ (210 aa). 169 to 224 provides a ligand contact to ATP; it reads AEKLGHDMFVKPSNQGSSVGVNHVTNAEEYAAALEEAFKYDDKVLVEETVPGTEVE. Mg(2+)-binding residues include Asp-297, Glu-310, and Asn-312.

This sequence belongs to the D-alanine--D-alanine ligase family. The cofactor is Mg(2+). It depends on Mn(2+) as a cofactor.

The protein resides in the cytoplasm. It carries out the reaction 2 D-alanine + ATP = D-alanyl-D-alanine + ADP + phosphate + H(+). It participates in cell wall biogenesis; peptidoglycan biosynthesis. Functionally, cell wall formation. This is D-alanine--D-alanine ligase from Lactobacillus acidophilus (strain ATCC 700396 / NCK56 / N2 / NCFM).